A 642-amino-acid chain; its full sequence is Cysteine-rich receptor-like protein kinase 27 (642 aa).

The N-terminal stretch at 1-24 (MASTSIMLSSFFSFFFLTFFVTYA) is a signal peptide. The Extracellular segment spans residues 25–274 (QQNVTVHTIC…QGKSKDRSKT (250 aa)). N-linked (GlcNAc...) asparagine glycans are attached at residues Asn-27, Asn-40, Asn-44, Asn-70, Asn-145, Asn-173, and Asn-258. 2 consecutive Gnk2-homologous domains span residues 29–130 (TVHT…SRII) and 136–240 (PVPF…VYPF). A helical transmembrane segment spans residues 275 to 295 (LIFAVVPIVAIILGLVFLFIY). The Cytoplasmic portion of the chain corresponds to 296–642 (LKRRRKKKTL…DVSLTDLSAR (347 aa)). The 288-residue stretch at 333–620 (FSLTNKIGEG…QLPKPSQPGF (288 aa)) folds into the Protein kinase domain. Residues 339–347 (IGEGGFGVV) and Lys-361 contribute to the ATP site. Tyr-406 carries the post-translational modification Phosphotyrosine. Asp-458 acts as the Proton acceptor in catalysis. Ser-462 carries the post-translational modification Phosphoserine. Position 498 is a phosphothreonine (Thr-498). Position 506 is a phosphotyrosine (Tyr-506).

It belongs to the protein kinase superfamily. Ser/Thr protein kinase family. CRK subfamily.

It localises to the membrane. The catalysed reaction is L-seryl-[protein] + ATP = O-phospho-L-seryl-[protein] + ADP + H(+). It catalyses the reaction L-threonyl-[protein] + ATP = O-phospho-L-threonyl-[protein] + ADP + H(+). The sequence is that of Cysteine-rich receptor-like protein kinase 27 (CRK27) from Arabidopsis thaliana (Mouse-ear cress).